The primary structure comprises 422 residues: UDP-N-acetylglucosamine 1-carboxyvinyltransferase (422 aa).

22–23 contacts phosphoenolpyruvate; sequence KN. R94 is a UDP-N-acetyl-alpha-D-glucosamine binding site. C118 serves as the catalytic Proton donor. C118 bears the 2-(S-cysteinyl)pyruvic acid O-phosphothioketal mark. Residues 123 to 127, D309, and L331 contribute to the UDP-N-acetyl-alpha-D-glucosamine site; that span reads RPIDL.

This sequence belongs to the EPSP synthase family. MurA subfamily.

It is found in the cytoplasm. It catalyses the reaction phosphoenolpyruvate + UDP-N-acetyl-alpha-D-glucosamine = UDP-N-acetyl-3-O-(1-carboxyvinyl)-alpha-D-glucosamine + phosphate. It participates in cell wall biogenesis; peptidoglycan biosynthesis. Its function is as follows. Cell wall formation. Adds enolpyruvyl to UDP-N-acetylglucosamine. This is UDP-N-acetylglucosamine 1-carboxyvinyltransferase from Sulfurimonas denitrificans (strain ATCC 33889 / DSM 1251) (Thiomicrospira denitrificans (strain ATCC 33889 / DSM 1251)).